A 607-amino-acid polypeptide reads, in one-letter code: UvrABC system protein C (607 aa).

In terms of domain architecture, GIY-YIG spans 16 to 94 (GRPGVYRMFD…IKEWRPPYNI (79 aa)). Positions 203-238 (NALSDELNATMEKAAMALDFERAAELRDQVALLRRV) constitute a UVR domain.

The protein belongs to the UvrC family. In terms of assembly, interacts with UvrB in an incision complex.

It localises to the cytoplasm. Functionally, the UvrABC repair system catalyzes the recognition and processing of DNA lesions. UvrC both incises the 5' and 3' sides of the lesion. The N-terminal half is responsible for the 3' incision and the C-terminal half is responsible for the 5' incision. The chain is UvrABC system protein C from Pseudomonas savastanoi pv. phaseolicola (strain 1448A / Race 6) (Pseudomonas syringae pv. phaseolicola (strain 1448A / Race 6)).